Consider the following 398-residue polypeptide: Proteasome-activating nucleotidase (398 aa).

A coiled-coil region spans residues 18–59 (IMYLKKRIRQLELQVRTLEADKERLERELSRLRMEMSRLRQP). Residues 183–188 (GCGKTL) and His322 each bind ATP. Positions 396-398 (MYG) are docks into pockets in the proteasome alpha-ring to cause gate opening.

The protein belongs to the AAA ATPase family. Homohexamer. The hexameric complex has a two-ring architecture resembling a top hat that caps the 20S proteasome core at one or both ends. Upon ATP-binding, the C-terminus of PAN interacts with the alpha-rings of the proteasome core by binding to the intersubunit pockets.

It localises to the cytoplasm. Functionally, ATPase which is responsible for recognizing, binding, unfolding and translocation of substrate proteins into the archaeal 20S proteasome core particle. Is essential for opening the gate of the 20S proteasome via an interaction with its C-terminus, thereby allowing substrate entry and access to the site of proteolysis. Thus, the C-termini of the proteasomal ATPase function like a 'key in a lock' to induce gate opening and therefore regulate proteolysis. Unfolding activity requires energy from ATP hydrolysis, whereas ATP binding alone promotes ATPase-20S proteasome association which triggers gate opening, and supports translocation of unfolded substrates. The protein is Proteasome-activating nucleotidase of Thermococcus onnurineus (strain NA1).